The primary structure comprises 212 residues: uncharacterized protein (212 aa).

Positions 87 to 105 (NNNNNNNNNNNHNHNNSNN) are enriched in low complexity. Residues 87–107 (NNNNNNNNNNNHNHNNSNNTA) are disordered.

This is an uncharacterized protein from Saccharomyces cerevisiae (strain ATCC 204508 / S288c) (Baker's yeast).